The chain runs to 430 residues: MPIPILHCDRNSKELYSRFLQGAREDLTTATDRILPILESVRTQGDQALFSYTEMFDGIKLSQLTIDPKKIKTNVDEKTKEAFLRAKSNIEAFHMEQKRESWSKVIDGNRLGVKYTPIPSLAVYAPGGKALYPSSVLMGIIPAKIAGVPSIQLITPPQKDGIPEILVWLAQIMDIDRIVTVGGAQGIAAAAYGTESVPKSEFIVGPGNAYVAAAKSYLSGQGLIGIESPAGPSEVCIIADENANPKWIACDMLSQAEHGEDSSAILLTTDLTLAKRVSEELEIAFSERPKRLQMKQTAIYENSSILVFPTLDDCIWFSNELAPEHLEIQTKDYESVFAKIEHAGSVFLGPYSPVAMGDYISGTNHILPTARGSRIYSSLGVDTFLKRVTFQEVTKESLENLYPFVKLMSELEGLDEEHGTSVKVRTRQFQ.

NAD(+)-binding residues include Tyr-124, Gln-185, and Asn-208. Positions 233, 255, and 258 each coordinate substrate. 2 residues coordinate Zn(2+): Gln-255 and His-258. Residues Glu-324 and His-325 each act as proton acceptor in the active site. Residues His-325, Asp-358, Glu-412, and His-418 each contribute to the substrate site. Asp-358 contacts Zn(2+). His-418 provides a ligand contact to Zn(2+).

Belongs to the histidinol dehydrogenase family. Requires Zn(2+) as cofactor.

The catalysed reaction is L-histidinol + 2 NAD(+) + H2O = L-histidine + 2 NADH + 3 H(+). It participates in amino-acid biosynthesis; L-histidine biosynthesis; L-histidine from 5-phospho-alpha-D-ribose 1-diphosphate: step 9/9. Functionally, catalyzes the sequential NAD-dependent oxidations of L-histidinol to L-histidinaldehyde and then to L-histidine. This is Histidinol dehydrogenase from Leptospira biflexa serovar Patoc (strain Patoc 1 / Ames).